The chain runs to 459 residues: Methylenetetrahydrofolate--tRNA-(uracil-5-)-methyltransferase TrmFO (459 aa).

Residue 11–16 coordinates FAD; that stretch reads GAGLAG.

It belongs to the MnmG family. TrmFO subfamily. FAD is required as a cofactor.

The protein localises to the cytoplasm. The catalysed reaction is uridine(54) in tRNA + (6R)-5,10-methylene-5,6,7,8-tetrahydrofolate + NADH + H(+) = 5-methyluridine(54) in tRNA + (6S)-5,6,7,8-tetrahydrofolate + NAD(+). It carries out the reaction uridine(54) in tRNA + (6R)-5,10-methylene-5,6,7,8-tetrahydrofolate + NADPH + H(+) = 5-methyluridine(54) in tRNA + (6S)-5,6,7,8-tetrahydrofolate + NADP(+). Catalyzes the folate-dependent formation of 5-methyl-uridine at position 54 (M-5-U54) in all tRNAs. The polypeptide is Methylenetetrahydrofolate--tRNA-(uracil-5-)-methyltransferase TrmFO (Synechococcus sp. (strain CC9311)).